A 603-amino-acid polypeptide reads, in one-letter code: 65-kDa microtubule-associated protein 7 (603 aa).

Coiled-coil stretches lie at residues 48-79, 131-186, and 468-502; these read KECLEIYRRKVDEAANSKAQLHQSLVSIEAEI, DIKA…EKSD, and RLVSILEDYKLTRKQQEEEKRRYRDQKKMQDLLIK. The segment at 501–559 is disordered; the sequence is IKRRESIYGSKPSPRRSNSVRKTNGYNGDASVPPTPRRNSAGATNNDIMTTPRSYSSHR. The residue at position 513 (serine 513) is a Phosphoserine. Polar residues-rich tracts occupy residues 515 to 526 and 537 to 559; these read RRSNSVRKTNGY and RRNSAGATNNDIMTTPRSYSSHR. The residue at position 599 (serine 599) is a Phosphoserine.

Belongs to the MAP65/ASE1 family. In terms of assembly, forms dimer. Binds to microtubules (MT).

It localises to the nucleus. The protein resides in the cytoplasm. The protein localises to the cytoskeleton. It is found in the spindle pole. This Arabidopsis thaliana (Mouse-ear cress) protein is 65-kDa microtubule-associated protein 7 (MAP65-7).